A 239-amino-acid chain; its full sequence is Proteasome activator complex subunit 2 (239 aa).

Ala-2 carries the post-translational modification N-acetylalanine. Ser-10 is modified (phosphoserine). Positions 65–86 are disordered; the sequence is DIPIPDPPPKDDEMETDKQEKK. Residues 72–86 are compositionally biased toward basic and acidic residues; the sequence is PPKDDEMETDKQEKK.

The protein belongs to the PA28 family. As to quaternary structure, heterodimer of PSME1 and PSME2, which forms a hexameric ring.

Its function is as follows. Implicated in immunoproteasome assembly and required for efficient antigen processing. The PA28 activator complex enhances the generation of class I binding peptides by altering the cleavage pattern of the proteasome. The polypeptide is Proteasome activator complex subunit 2 (PSME2) (Sus scrofa (Pig)).